Reading from the N-terminus, the 785-residue chain is Endonuclease MutS2 (785 aa).

335–342 contacts ATP; sequence GPNTGGKT. Positions 710–785 constitute a Smr domain; the sequence is LDLRGERYED…GNGVTIVEFK (76 aa).

Belongs to the DNA mismatch repair MutS family. MutS2 subfamily. Homodimer. Binds to stalled ribosomes, contacting rRNA.

Functionally, endonuclease that is involved in the suppression of homologous recombination and thus may have a key role in the control of bacterial genetic diversity. In terms of biological role, acts as a ribosome collision sensor, splitting the ribosome into its 2 subunits. Detects stalled/collided 70S ribosomes which it binds and splits by an ATP-hydrolysis driven conformational change. Acts upstream of the ribosome quality control system (RQC), a ribosome-associated complex that mediates the extraction of incompletely synthesized nascent chains from stalled ribosomes and their subsequent degradation. Probably generates substrates for RQC. This is Endonuclease MutS2 from Listeria innocua serovar 6a (strain ATCC BAA-680 / CLIP 11262).